A 499-amino-acid polypeptide reads, in one-letter code: Bifunctional purine biosynthesis protein PurH (499 aa).

Positions 1–144 (MIKRALISVF…KNFKDVVVLT (144 aa)) constitute an MGS-like domain.

Belongs to the PurH family.

The enzyme catalyses (6R)-10-formyltetrahydrofolate + 5-amino-1-(5-phospho-beta-D-ribosyl)imidazole-4-carboxamide = 5-formamido-1-(5-phospho-D-ribosyl)imidazole-4-carboxamide + (6S)-5,6,7,8-tetrahydrofolate. It carries out the reaction IMP + H2O = 5-formamido-1-(5-phospho-D-ribosyl)imidazole-4-carboxamide. Its pathway is purine metabolism; IMP biosynthesis via de novo pathway; 5-formamido-1-(5-phospho-D-ribosyl)imidazole-4-carboxamide from 5-amino-1-(5-phospho-D-ribosyl)imidazole-4-carboxamide (10-formyl THF route): step 1/1. It functions in the pathway purine metabolism; IMP biosynthesis via de novo pathway; IMP from 5-formamido-1-(5-phospho-D-ribosyl)imidazole-4-carboxamide: step 1/1. The chain is Bifunctional purine biosynthesis protein PurH from Clostridium botulinum (strain Kyoto / Type A2).